Here is a 146-residue protein sequence, read N- to C-terminus: D-aminoacyl-tRNA deacylase (146 aa).

Positions 137 to 138 (GP) match the Gly-cisPro motif, important for rejection of L-amino acids motif.

The protein belongs to the DTD family. As to quaternary structure, homodimer.

The protein localises to the cytoplasm. The catalysed reaction is glycyl-tRNA(Ala) + H2O = tRNA(Ala) + glycine + H(+). The enzyme catalyses a D-aminoacyl-tRNA + H2O = a tRNA + a D-alpha-amino acid + H(+). In terms of biological role, an aminoacyl-tRNA editing enzyme that deacylates mischarged D-aminoacyl-tRNAs. Also deacylates mischarged glycyl-tRNA(Ala), protecting cells against glycine mischarging by AlaRS. Acts via tRNA-based rather than protein-based catalysis; rejects L-amino acids rather than detecting D-amino acids in the active site. By recycling D-aminoacyl-tRNA to D-amino acids and free tRNA molecules, this enzyme counteracts the toxicity associated with the formation of D-aminoacyl-tRNA entities in vivo and helps enforce protein L-homochirality. This chain is D-aminoacyl-tRNA deacylase, found in Bacillus cytotoxicus (strain DSM 22905 / CIP 110041 / 391-98 / NVH 391-98).